Here is a 353-residue protein sequence, read N- to C-terminus: tRNA N6-adenosine threonylcarbamoyltransferase (353 aa).

The Fe cation site is built by histidine 111 and histidine 115. Substrate contacts are provided by residues 134–138, aspartate 167, glycine 180, aspartate 184, and asparagine 279; that span reads LVSGG. Residue aspartate 307 coordinates Fe cation.

It belongs to the KAE1 / TsaD family. Requires Fe(2+) as cofactor.

It localises to the cytoplasm. The enzyme catalyses L-threonylcarbamoyladenylate + adenosine(37) in tRNA = N(6)-L-threonylcarbamoyladenosine(37) in tRNA + AMP + H(+). Functionally, required for the formation of a threonylcarbamoyl group on adenosine at position 37 (t(6)A37) in tRNAs that read codons beginning with adenine. Is involved in the transfer of the threonylcarbamoyl moiety of threonylcarbamoyl-AMP (TC-AMP) to the N6 group of A37, together with TsaE and TsaB. TsaD likely plays a direct catalytic role in this reaction. The sequence is that of tRNA N6-adenosine threonylcarbamoyltransferase from Thermosynechococcus vestitus (strain NIES-2133 / IAM M-273 / BP-1).